Here is a 503-residue protein sequence, read N- to C-terminus: Glucose-6-phosphate 1-dehydrogenase (503 aa).

Residues 14–21, Arg49, and Lys158 each bind NADP(+); that span reads GASGDLSK. D-glucose 6-phosphate is bound by residues Lys158, 188–192, Glu226, and Asp245; that span reads HYLGK. The active-site Proton acceptor is His250. Lys341 contacts NADP(+). Lys344 is a binding site for D-glucose 6-phosphate. Residues Lys350, Arg354, and Arg376 each coordinate NADP(+). Gln378 serves as a coordination point for D-glucose 6-phosphate. NADP(+)-binding positions include 384–386, Arg471, and Tyr487; that span reads YLK.

This sequence belongs to the glucose-6-phosphate dehydrogenase family.

The catalysed reaction is D-glucose 6-phosphate + NADP(+) = 6-phospho-D-glucono-1,5-lactone + NADPH + H(+). The protein operates within carbohydrate degradation; pentose phosphate pathway; D-ribulose 5-phosphate from D-glucose 6-phosphate (oxidative stage): step 1/3. In terms of biological role, catalyzes the rate-limiting step of the oxidative pentose-phosphate pathway, which represents a route for the dissimilation of carbohydrates besides glycolysis. The main function of this enzyme is to provide reducing power (NADPH) and pentose phosphates for fatty acid and nucleic acid synthesis. The G6PDH activity is required to cope with hydrogen peroxide and potassium bisulfite stresses and plays a role in adaptation to conditions used in wine fermentations. This Hanseniaspora uvarum (Yeast) protein is Glucose-6-phosphate 1-dehydrogenase.